Consider the following 608-residue polypeptide: uncharacterized protein (608 aa).

The segment at Met1 to Arg21 is disordered. Position 24 is a phosphothreonine (Thr24). Ser27 is modified (phosphoserine). A helical transmembrane segment spans residues Ile55–Ile75. Residues Asn115, Asn141, Asn169, Asn407, Asn425, Asn449, Asn453, Asn527, and Asn580 are each glycosylated (N-linked (GlcNAc...) asparagine).

It is found in the membrane. This is an uncharacterized protein from Saccharomyces cerevisiae (strain ATCC 204508 / S288c) (Baker's yeast).